The primary structure comprises 282 residues: Bis(5'-nucleosyl)-tetraphosphatase, symmetrical (282 aa).

It belongs to the Ap4A hydrolase family.

It catalyses the reaction P(1),P(4)-bis(5'-adenosyl) tetraphosphate + H2O = 2 ADP + 2 H(+). In terms of biological role, hydrolyzes diadenosine 5',5'''-P1,P4-tetraphosphate to yield ADP. This is Bis(5'-nucleosyl)-tetraphosphatase, symmetrical from Escherichia coli O7:K1 (strain IAI39 / ExPEC).